Reading from the N-terminus, the 260-residue chain is MERLENCAQMFQRRFLNESFRRHCPVLLACIVLGGSLLKELCPLPDSYWNNKRNVLNVYFVKFSWGWTLWLLLPFIALTNYKLTRSTTKVLRRLSSLLVSTLIWYLCTNLFLYIENITGSCYESEAMSDPKEHQDRRECRLHSGYWHGFDISGHCFLLSYCILLILEETSIISNIRFERHWHRMAINAQFAALSILVIIWVWMFLCTAVYFHNIFQKVIGTAFGILAWYITYRWWYLQPISPGLPPASASRSGKEPIYRN.

Over M1–H23 the chain is Cytoplasmic. Residues C24–L44 form a helical membrane-spanning segment. Over P45 to N57 the chain is Lumenal. Residues V58–L78 traverse the membrane as a helical segment. Residues T79–R93 lie on the Cytoplasmic side of the membrane. Residues L94–I114 form a helical membrane-spanning segment. Over E115 to Y145 the chain is Lumenal. A helical transmembrane segment spans residues W146–L166. H154 is a catalytic residue. At E167 to Q189 the chain is on the cytoplasmic side. Transmembrane regions (helical) follow at residues F190–Y210 and F211–T231. H212 is an active-site residue. Residues Y232–N260 lie on the Cytoplasmic side of the membrane.

Belongs to the FIT family. FIT2 subfamily.

It is found in the endoplasmic reticulum membrane. It catalyses the reaction an acyl-CoA + H2O = an acyl-4'-phosphopantetheine + adenosine 3',5'-bisphosphate + 2 H(+). Fatty acyl-coenzyme A (CoA) diphosphatase that hydrolyzes fatty acyl-CoA to yield acyl-4'-phosphopantetheine and adenosine 3',5'-bisphosphate. Preferentially hydrolyzes unsaturated long-chain acyl-CoA substrates in the endoplasmic reticulum (ER) lumen. This catalytic activity is required for maintaining ER structure and for lipid droplets (LDs) biogenesis, which are lipid storage organelles involved in maintaining lipid and energy homeostasis. May directly bind to diacylglycerol (DAGs) and triacylglycerol, which is also important for LD biogenesis. May support directional budding of nacent LDs from the ER into the cytosol by reducing DAG levels at sites of LD formation. May play a role in the regulation of cell morphology, ER morphology and cytoskeletal organization. This Xenopus tropicalis (Western clawed frog) protein is Acyl-coenzyme A diphosphatase FITM2.